Here is a 244-residue protein sequence, read N- to C-terminus: Tabinhibitin 8 (244 aa).

The N-terminal stretch at 1–23 (MTSILVSRFKISALTLQYATSDS) is a signal peptide. One can recognise an SCP domain in the interval 67–194 (YTGGGIIVLR…KTPLFFSSNC (128 aa)). A Cell attachment site motif is present at residues 143–145 (RGD).

Belongs to the CRISP family. As to expression, expressed in salivary glands.

Its subcellular location is the secreted. Its function is as follows. Inhibits platelet aggregation induced by all agonists tested (ADP, arachidonic acid, the thromboxane A2 analog U46619, thrombin, and snake venom snaclecs (TMVA that activates platelet through GPIB, and stejnulxin that specifically acts through GPVI (GP6))). May act by competing with fibrinogen for binding to glycoprotein IIb/IIIa (ITGA2B/ITGB3). This Tabanus yao (Horsefly) protein is Tabinhibitin 8.